Here is a 319-residue protein sequence, read N- to C-terminus: Phosphoenolpyruvate transferase (319 aa).

Asp50 lines the 7,8-didemethyl-8-hydroxy-5-deazariboflavin pocket.

It belongs to the CofD family. As to quaternary structure, homodimer. It depends on Mg(2+) as a cofactor.

It carries out the reaction enolpyruvoyl-2-diphospho-5'-guanosine + 7,8-didemethyl-8-hydroxy-5-deazariboflavin = dehydro coenzyme F420-0 + GMP + H(+). Its pathway is cofactor biosynthesis; coenzyme F420 biosynthesis. Its function is as follows. Catalyzes the transfer of the phosphoenolpyruvate moiety from enoylpyruvoyl-2-diphospho-5'-guanosine (EPPG) to 7,8-didemethyl-8-hydroxy-5-deazariboflavin (FO) with the formation of dehydro coenzyme F420-0 and GMP. This Streptomyces avermitilis (strain ATCC 31267 / DSM 46492 / JCM 5070 / NBRC 14893 / NCIMB 12804 / NRRL 8165 / MA-4680) protein is Phosphoenolpyruvate transferase.